The primary structure comprises 72 residues: Cytochrome c oxidase copper chaperone 2 (72 aa).

Cu cation contacts are provided by Cys32 and Cys33. The CHCH domain maps to 32-72; that stretch reads CCACPDTKKLRDECIVEHGESACTKWIEAHILCLRSEGFKV. 2 short sequence motifs (cx9C motif) span residues 35 to 45 and 54 to 64; these read CPDTKKLRDEC and CTKWIEAHILC. Cystine bridges form between Cys35–Cys64 and Cys45–Cys54.

It belongs to the COX17 family.

It is found in the mitochondrion intermembrane space. Its function is as follows. Copper chaperone for cytochrome c oxidase (COX). Binds 2 copper ions and delivers them to the Cu(A) site of COX. This is Cytochrome c oxidase copper chaperone 2 (COX17-2) from Arabidopsis thaliana (Mouse-ear cress).